Reading from the N-terminus, the 191-residue chain is Protein YceI (191 aa).

The first 22 residues, 1 to 22 (MKKNLLGFTLASLLFTTGSAVA), serve as a signal peptide directing secretion.

This sequence belongs to the UPF0312 family. Type 1 subfamily.

The protein resides in the periplasm. The polypeptide is Protein YceI (Salmonella dublin (strain CT_02021853)).